We begin with the raw amino-acid sequence, 456 residues long: Na(+)-translocating NADH-quinone reductase subunit A (456 aa).

It belongs to the NqrA family. In terms of assembly, composed of six subunits; NqrA, NqrB, NqrC, NqrD, NqrE and NqrF.

The catalysed reaction is a ubiquinone + n Na(+)(in) + NADH + H(+) = a ubiquinol + n Na(+)(out) + NAD(+). Its function is as follows. NQR complex catalyzes the reduction of ubiquinone-1 to ubiquinol by two successive reactions, coupled with the transport of Na(+) ions from the cytoplasm to the periplasm. NqrA to NqrE are probably involved in the second step, the conversion of ubisemiquinone to ubiquinol. This chain is Na(+)-translocating NADH-quinone reductase subunit A, found in Rhodopirellula baltica (strain DSM 10527 / NCIMB 13988 / SH1).